A 103-amino-acid chain; its full sequence is Small ribosomal subunit protein uS10 (103 aa).

It belongs to the universal ribosomal protein uS10 family. As to quaternary structure, part of the 30S ribosomal subunit.

Involved in the binding of tRNA to the ribosomes. The sequence is that of Small ribosomal subunit protein uS10 from Psychrobacter sp. (strain PRwf-1).